The sequence spans 290 residues: 33 kDa chaperonin (290 aa).

Cystine bridges form between C231–C233 and C263–C266.

The protein belongs to the HSP33 family. Under oxidizing conditions two disulfide bonds are formed involving the reactive cysteines. Under reducing conditions zinc is bound to the reactive cysteines and the protein is inactive.

It is found in the cytoplasm. Redox regulated molecular chaperone. Protects both thermally unfolding and oxidatively damaged proteins from irreversible aggregation. Plays an important role in the bacterial defense system toward oxidative stress. This is 33 kDa chaperonin from Thermotoga sp. (strain RQ2).